The chain runs to 642 residues: DNA gyrase subunit B (642 aa).

In terms of domain architecture, Toprim spans 422-536 (CELFIVEGDS…AGYVYIAQPP (115 aa)). Residues Glu-428, Asp-501, and Asp-503 each coordinate Mg(2+).

Belongs to the type II topoisomerase family. In terms of assembly, heterotetramer, composed of two GyrA and two GyrB chains. Within the heterotetramer, GyrA contains the active site tyrosine that forms a covalent intermediate with the DNA, while GyrB contributes the cofactor binding sites and catalyzes ATP hydrolysis. Mg(2+) is required as a cofactor. The cofactor is Mn(2+). Ca(2+) serves as cofactor.

The protein localises to the cytoplasm. The catalysed reaction is ATP-dependent breakage, passage and rejoining of double-stranded DNA.. Its activity is regulated as follows. Pyrrolopyrimidines inhibit both GyrB and its paralog in topoisomerase IV (parE). DNA gyrase negatively supercoils closed circular double-stranded DNA in an ATP-dependent manner and also catalyzes the interconversion of other topological isomers of double-stranded DNA rings, including catenanes and knotted rings. The protein is DNA gyrase subunit B of Enterococcus faecalis (strain ATCC 700802 / V583).